Here is a 268-residue protein sequence, read N- to C-terminus: Ribosomal RNA small subunit methyltransferase A (268 aa).

S-adenosyl-L-methionine contacts are provided by Asn-16, Leu-18, Gly-43, Glu-64, Asp-89, and Asn-110.

This sequence belongs to the class I-like SAM-binding methyltransferase superfamily. rRNA adenine N(6)-methyltransferase family. RsmA subfamily.

It localises to the cytoplasm. The catalysed reaction is adenosine(1518)/adenosine(1519) in 16S rRNA + 4 S-adenosyl-L-methionine = N(6)-dimethyladenosine(1518)/N(6)-dimethyladenosine(1519) in 16S rRNA + 4 S-adenosyl-L-homocysteine + 4 H(+). Specifically dimethylates two adjacent adenosines (A1518 and A1519) in the loop of a conserved hairpin near the 3'-end of 16S rRNA in the 30S particle. May play a critical role in biogenesis of 30S subunits. The polypeptide is Ribosomal RNA small subunit methyltransferase A (Pseudomonas syringae pv. syringae (strain B728a)).